The following is a 191-amino-acid chain: MNKKIVLFGGQFNPIHTAHLAVASEVYHAIKPDIFFFLPSYMAPLKHHNTQLYSEHRVKMIQLAIKEIGFGEICTTDLDRKGPSYTYETILHLKEIYHNAQLYFIIGTDQYNQLDKWYKINELKKLVTFIVVNRETDNQNVSKEMISIKIPRIDISSTMIRNRVRMNQSIKVLVPKRVENYIKEEGFYGDK.

Belongs to the NadD family.

It catalyses the reaction nicotinate beta-D-ribonucleotide + ATP + H(+) = deamido-NAD(+) + diphosphate. Its pathway is cofactor biosynthesis; NAD(+) biosynthesis; deamido-NAD(+) from nicotinate D-ribonucleotide: step 1/1. Functionally, catalyzes the reversible adenylation of nicotinate mononucleotide (NaMN) to nicotinic acid adenine dinucleotide (NaAD). The protein is Probable nicotinate-nucleotide adenylyltransferase of Staphylococcus epidermidis (strain ATCC 12228 / FDA PCI 1200).